The sequence spans 146 residues: uncharacterized protein (146 aa).

Residues 119–128 (AQADLEHEES) are compositionally biased toward basic and acidic residues. Residues 119 to 146 (AQADLEHEESASIDQDEMVAIETRKTKK) form a disordered region.

This is an uncharacterized protein from Schizosaccharomyces pombe (strain 972 / ATCC 24843) (Fission yeast).